An 855-amino-acid chain; its full sequence is Leucine--tRNA ligase (855 aa).

Positions 45 to 55 match the 'HIGH' region motif; that stretch reads PYPSGRLHMGH. The 'KMSKS' region signature appears at 619 to 623; that stretch reads KMSKS. Lys622 contacts ATP.

Belongs to the class-I aminoacyl-tRNA synthetase family.

It is found in the cytoplasm. The catalysed reaction is tRNA(Leu) + L-leucine + ATP = L-leucyl-tRNA(Leu) + AMP + diphosphate. This Hyphomonas neptunium (strain ATCC 15444) protein is Leucine--tRNA ligase.